The chain runs to 193 residues: Putative histone H2B type 2-C (193 aa).

Residues 1 to 12 (MPEPAKFAPAPK) show a composition bias toward low complexity. Residues 1-33 (MPEPAKFAPAPKKGSKKAVTKAQKKDGKKRKRS) form a disordered region. P2 is subject to N-acetylproline. K6 carries the post-translational modification N6-(2-hydroxyisobutyryl)lysine; alternate. Residues K6 and K12 each carry the N6-(beta-hydroxybutyryl)lysine; alternate modification. N6-acetyllysine; alternate is present on residues K6, K12, and K13. At K6 the chain carries N6-butyryllysine; alternate. An N6-crotonyllysine; alternate mark is found at K6, K12, and K13. Residues K6 and K12 each carry the N6-lactoyllysine; alternate modification. A Glycyl lysine isopeptide (Lys-Gly) (interchain with G-Cter in SUMO2); alternate cross-link involves residue K6. Position 13 is an N6-(2-hydroxyisobutyryl)lysine; alternate (K13). Position 15 is a phosphoserine; by STK4/MST1 (S15). K16, K17, K21, and K24 each carry N6-acetyllysine; alternate. Residues K16, K17, K21, and K24 each carry the N6-crotonyllysine; alternate modification. K16, K17, K21, and K24 each carry N6-lactoyllysine; alternate. N6-(beta-hydroxybutyryl)lysine; alternate is present on residues K17 and K21. Residue K17 is modified to N6-glutaryllysine; alternate. 2 positions are modified to N6-(2-hydroxyisobutyryl)lysine; alternate: K21 and K24. The residue at position 21 (K21) is an N6-butyryllysine; alternate. A Glycyl lysine isopeptide (Lys-Gly) (interchain with G-Cter in SUMO2); alternate cross-link involves residue K21. N6-(2-hydroxyisobutyryl)lysine is present on K25. K35 carries the post-translational modification N6-(2-hydroxyisobutyryl)lysine; alternate. K35 is subject to N6-(beta-hydroxybutyryl)lysine; alternate. K35 carries the post-translational modification N6-crotonyllysine; alternate. K35 is modified (N6-glutaryllysine; alternate). The residue at position 35 (K35) is an N6-succinyllysine; alternate. K35 is covalently cross-linked (Glycyl lysine isopeptide (Lys-Gly) (interchain with G-Cter in ubiquitin); alternate). S37 is modified (phosphoserine; by AMPK). An N6-(2-hydroxyisobutyryl)lysine; alternate mark is found at K44, K47, and K58. K44 carries the post-translational modification N6-lactoyllysine; alternate. Residues K44 and K47 each carry the N6-glutaryllysine; alternate modification. K47 is modified (N6-methyllysine; alternate). K58 carries the N6,N6-dimethyllysine; alternate modification. R80 is subject to Dimethylated arginine. The residue at position 86 (K86) is an N6-(2-hydroxyisobutyryl)lysine; alternate. At K86 the chain carries N6-(beta-hydroxybutyryl)lysine; alternate. K86 is subject to N6-acetyllysine; alternate. K86 is modified (N6-lactoyllysine; alternate). K86 is modified (N6,N6,N6-trimethyllysine; alternate). An omega-N-methylarginine mark is found at R87 and R93. A disordered region spans residues 111 to 136 (PCPRAPRRSPSTPAPSESLPGPGARS).

The protein belongs to the histone H2B family. In terms of assembly, the nucleosome is a histone octamer containing two molecules each of H2A, H2B, H3 and H4 assembled in one H3-H4 heterotetramer and two H2A-H2B heterodimers. The octamer wraps approximately 147 bp of DNA. Post-translationally, phosphorylation at Ser-37 (H2BS36ph) by AMPK in response to stress promotes transcription. Phosphorylated on Ser-15 (H2BS14ph) by STK4/MST1 during apoptosis; which facilitates apoptotic chromatin condensation. Also phosphorylated on Ser-15 in response to DNA double strand breaks (DSBs), and in correlation with somatic hypermutation and immunoglobulin class-switch recombination. In terms of processing, crotonylation (Kcr) is specifically present in male germ cells and marks testis-specific genes in post-meiotic cells, including X-linked genes that escape sex chromosome inactivation in haploid cells. Crotonylation marks active promoters and enhancers and confers resistance to transcriptional repressors. It is also associated with post-meiotically activated genes on autosomes. Lactylated in macrophages by EP300/P300 by using lactoyl-CoA directly derived from endogenous or exogenous lactate, leading to stimulates gene transcription.

It localises to the nucleus. The protein resides in the chromosome. In terms of biological role, core component of nucleosome. Nucleosomes wrap and compact DNA into chromatin, limiting DNA accessibility to the cellular machineries which require DNA as a template. Histones thereby play a central role in transcription regulation, DNA repair, DNA replication and chromosomal stability. DNA accessibility is regulated via a complex set of post-translational modifications of histones, also called histone code, and nucleosome remodeling. This chain is Putative histone H2B type 2-C, found in Homo sapiens (Human).